A 38-amino-acid polypeptide reads, in one-letter code: Photosystem II reaction center protein L (38 aa).

A helical transmembrane segment spans residues 17-37; that stretch reads SLYWGLLLIFVLAVLFSNYFF.

Belongs to the PsbL family. As to quaternary structure, PSII is composed of 1 copy each of membrane proteins PsbA, PsbB, PsbC, PsbD, PsbE, PsbF, PsbH, PsbI, PsbJ, PsbK, PsbL, PsbM, PsbT, PsbX, PsbY, PsbZ, Psb30/Ycf12, at least 3 peripheral proteins of the oxygen-evolving complex and a large number of cofactors. It forms dimeric complexes.

The protein resides in the plastid. Its subcellular location is the chloroplast thylakoid membrane. One of the components of the core complex of photosystem II (PSII). PSII is a light-driven water:plastoquinone oxidoreductase that uses light energy to abstract electrons from H(2)O, generating O(2) and a proton gradient subsequently used for ATP formation. It consists of a core antenna complex that captures photons, and an electron transfer chain that converts photonic excitation into a charge separation. This subunit is found at the monomer-monomer interface and is required for correct PSII assembly and/or dimerization. The sequence is that of Photosystem II reaction center protein L from Psilotum nudum (Whisk fern).